The sequence spans 166 residues: Small ribosomal subunit protein uS5 (166 aa).

The S5 DRBM domain maps to 11-74; sequence LQEKLIAVNR…EKARRNMINV (64 aa).

The protein belongs to the universal ribosomal protein uS5 family. In terms of assembly, part of the 30S ribosomal subunit. Contacts proteins S4 and S8.

In terms of biological role, with S4 and S12 plays an important role in translational accuracy. Located at the back of the 30S subunit body where it stabilizes the conformation of the head with respect to the body. The protein is Small ribosomal subunit protein uS5 of Actinobacillus succinogenes (strain ATCC 55618 / DSM 22257 / CCUG 43843 / 130Z).